We begin with the raw amino-acid sequence, 86 residues long: Serine protease inhibitor Kazal-type 2 (86 aa).

The N-terminal stretch at 1–16 (MLRLVLLLLATDFAAS) is a signal peptide. Residues 32-86 (QFRTPDCHRFDYPVCSKHLSPVCGTDMNTYGNECTLCMKIREDGSHINIIKDEPC) form the Kazal-like domain. 3 disulfides stabilise this stretch: cysteine 38–cysteine 68, cysteine 46–cysteine 65, and cysteine 54–cysteine 86.

It is found in the secreted. The protein localises to the cytoplasmic vesicle. The protein resides in the secretory vesicle. It localises to the acrosome. As a strong inhibitor of acrosin, it is required for normal spermiogenesis. It probably hinders premature activation of proacrosin and other proteases, thus preventing the cascade of events leading to spermiogenesis defects. May be involved in the regulation of serine protease-dependent germ cell apoptosis. It also inhibits trypsin. In Rattus norvegicus (Rat), this protein is Serine protease inhibitor Kazal-type 2 (Spink2).